The sequence spans 299 residues: Acetylglutamate kinase (299 aa).

Substrate is bound by residues 72-73 (GG), Arg94, and Asn196.

This sequence belongs to the acetylglutamate kinase family. ArgB subfamily.

It localises to the cytoplasm. The catalysed reaction is N-acetyl-L-glutamate + ATP = N-acetyl-L-glutamyl 5-phosphate + ADP. Its pathway is amino-acid biosynthesis; L-arginine biosynthesis; N(2)-acetyl-L-ornithine from L-glutamate: step 2/4. In terms of biological role, catalyzes the ATP-dependent phosphorylation of N-acetyl-L-glutamate. This Burkholderia ambifaria (strain MC40-6) protein is Acetylglutamate kinase.